The sequence spans 349 residues: Trans-enoyl reductase phmE (349 aa).

Position 55-58 (55-58 (CDWK)) interacts with NADP(+). 143–150 (TGIGTMGL) serves as a coordination point for substrate. Residues 182 to 185 (SPKN), Tyr200, and 247 to 248 (LE) each bind NADP(+). A substrate-binding site is contributed by 267-271 (GMAIL). NADP(+) is bound at residue 336-337 (VS).

This sequence belongs to the zinc-containing alcohol dehydrogenase family. Monomer.

The protein operates within mycotoxin biosynthesis. Functionally, trans-enoyl reductase; part of the gene cluster that mediates the biosynthesis of the mycotoxins phomacins, leucine-derived cytochalasans with potent actin polymerization-inhibitory activities and monocot-specific antigerminative activities. The first step in the pathway is catalyzed by the hybrid PKS-NRPS phmA, assisted by the enoyl reductase phmE, that are responsible for fusion of the leucine precursor and the polyketide backbone to produce a 2-pyrrolidone intermediate. The polyketide synthase module (PKS) of phmA is responsible for the synthesis of the polyketide backbone and the downstream nonribosomal peptide synthetase (NRPS) amidates the carboxyl end of the polyketide with the leucine precursor. Because phmA lacks a designated enoylreductase (ER) domain, the required activity is provided the enoyl reductase phmE. Reduction by the hydrolyase phmG, followed by dehydration and intra-molecular Diels-Alder cyclization by the Diels-Alderase phmD then yield the required isoindolone-fused macrocycle. A number of oxidative steps catalyzed by the tailoring cytochrome P450 monooxygenase phmB, the FAD-linked oxidoreductase phmC and the short-chain dehydrogenase/reductase phmF, are further required to afford the final products, phomacin D and phomacin E. This is Trans-enoyl reductase phmE from Phaeosphaeria nodorum (strain SN15 / ATCC MYA-4574 / FGSC 10173) (Glume blotch fungus).